Here is a 948-residue protein sequence, read N- to C-terminus: Coatomer subunit beta-2 (948 aa).

HEAT repeat units lie at residues 49–87, 92–126, 127–164, 274–311, 312–349, and 391–428; these read ETIP…TDSK, PEMI…MKET, EIVE…LPHG, TAIR…TLHR, DIMV…HHNI, and EVAS…TNPK.

As to quaternary structure, oligomeric complex that consists of at least the alpha, beta, beta', gamma, delta, epsilon and zeta subunits.

The protein localises to the cytoplasm. The protein resides in the golgi apparatus membrane. It localises to the cytoplasmic vesicle. Its subcellular location is the COPI-coated vesicle membrane. The coatomer is a cytosolic protein complex that binds to dilysine motifs and reversibly associates with Golgi non-clathrin-coated vesicles, which further mediate biosynthetic protein transport from the ER, via the Golgi up to the trans Golgi network. Coatomer complex is required for budding from Golgi membranes, and is essential for the retrograde Golgi-to-ER transport of dilysine-tagged proteins. This chain is Coatomer subunit beta-2, found in Arabidopsis thaliana (Mouse-ear cress).